A 192-amino-acid polypeptide reads, in one-letter code: Fe/S biogenesis protein NfuA (192 aa).

[4Fe-4S] cluster contacts are provided by Cys149 and Cys152.

This sequence belongs to the NfuA family. As to quaternary structure, homodimer. It depends on [4Fe-4S] cluster as a cofactor.

Functionally, involved in iron-sulfur cluster biogenesis. Binds a 4Fe-4S cluster, can transfer this cluster to apoproteins, and thereby intervenes in the maturation of Fe/S proteins. Could also act as a scaffold/chaperone for damaged Fe/S proteins. The sequence is that of Fe/S biogenesis protein NfuA from Shewanella amazonensis (strain ATCC BAA-1098 / SB2B).